We begin with the raw amino-acid sequence, 206 residues long: CMP-5'-(N-acetyl-N-hydroxy-3-aminopropyl)phosphonate hydrolase (206 aa).

A Nudix hydrolase domain is found at 37-166; that stretch reads VRAPGAAIIV…RTVTSGTAIG (130 aa). The Nudix box signature appears at 74 to 95; sequence GLVDDREDPAVTAAREAEEETG. A compositionally biased stretch (low complexity) spans 177–194; the sequence is RQQPGGVQEQPGGAQQQG. The disordered stretch occupies residues 177-206; the sequence is RQQPGGVQEQPGGAQQQGMNESHSGRTVRG.

This sequence belongs to the Nudix hydrolase family. The cofactor is Mg(2+).

It catalyses the reaction CMP-5'-(N-acetyl-N-hydroxy-3-aminopropyl)phosphonate + H2O = 3-(N-acetyl-N-hydroxy)aminopropylphosphonate + CMP + H(+). Its pathway is antibiotic biosynthesis. In terms of biological role, nucleotide hydrolase involved in the biosynthesis of the phosphonate antibiotic FR-900098, a potent antimalarial agent that acts as an inhibitor of 1-deoxy-D-xylulose 5-phosphate reductoisomerase (DXR), the first enzyme in the nonmevalonate pathway for isoprenoid biosynthesis. Catalyzes the hydrolysis of CMP-5'-(N-acetyl-N-hydroxy-3-aminopropyl)phosphonate (CMP-5'-FR-900098) to produce CMP and the final compound FR-900098. In vitro, has broad substrate specificity and also catalyzes the hydrolysis of all the other CMP-containing intermediates within the pathway and shows low activity toward CTP. This is CMP-5'-(N-acetyl-N-hydroxy-3-aminopropyl)phosphonate hydrolase from Streptomyces rubellomurinus (strain ATCC 31215).